Here is a 104-residue protein sequence, read N- to C-terminus: Small ribosomal subunit protein uS10 (104 aa).

This sequence belongs to the universal ribosomal protein uS10 family. In terms of assembly, part of the 30S ribosomal subunit.

In terms of biological role, involved in the binding of tRNA to the ribosomes. The protein is Small ribosomal subunit protein uS10 of Helicobacter pylori (strain P12).